Consider the following 545-residue polypeptide: Chaperonin GroEL 2 (545 aa).

Residues T30–P33, K51, D87–T91, G415, and D496 each bind ATP.

The protein belongs to the chaperonin (HSP60) family. Forms a cylinder of 14 subunits composed of two heptameric rings stacked back-to-back. Interacts with the co-chaperonin GroES.

The protein localises to the cytoplasm. The catalysed reaction is ATP + H2O + a folded polypeptide = ADP + phosphate + an unfolded polypeptide.. Together with its co-chaperonin GroES, plays an essential role in assisting protein folding. The GroEL-GroES system forms a nano-cage that allows encapsulation of the non-native substrate proteins and provides a physical environment optimized to promote and accelerate protein folding. The protein is Chaperonin GroEL 2 of Nitrobacter winogradskyi (strain ATCC 25391 / DSM 10237 / CIP 104748 / NCIMB 11846 / Nb-255).